Here is a 369-residue protein sequence, read N- to C-terminus: Glutamate 5-kinase (369 aa).

K8 serves as a coordination point for ATP. S49, D136, and N148 together coordinate substrate. Residues 168-169 (TD) and 212-218 (TGGMMTK) contribute to the ATP site. The PUA domain occupies 277–355 (TGKLYLDSGA…KEISTILGYV (79 aa)).

This sequence belongs to the glutamate 5-kinase family.

It is found in the cytoplasm. It catalyses the reaction L-glutamate + ATP = L-glutamyl 5-phosphate + ADP. It functions in the pathway amino-acid biosynthesis; L-proline biosynthesis; L-glutamate 5-semialdehyde from L-glutamate: step 1/2. In terms of biological role, catalyzes the transfer of a phosphate group to glutamate to form L-glutamate 5-phosphate. This chain is Glutamate 5-kinase, found in Trichormus variabilis (strain ATCC 29413 / PCC 7937) (Anabaena variabilis).